The chain runs to 260 residues: NAD kinase (260 aa).

Asp49 functions as the Proton acceptor in the catalytic mechanism. NAD(+) is bound by residues 49 to 50, 119 to 120, Asp149, Ala157, and 160 to 165; these read DG, NE, and TAYNLS.

It belongs to the NAD kinase family. It depends on a divalent metal cation as a cofactor.

It is found in the cytoplasm. It carries out the reaction NAD(+) + ATP = ADP + NADP(+) + H(+). Functionally, involved in the regulation of the intracellular balance of NAD and NADP, and is a key enzyme in the biosynthesis of NADP. Catalyzes specifically the phosphorylation on 2'-hydroxyl of the adenosine moiety of NAD to yield NADP. This Caulobacter vibrioides (strain ATCC 19089 / CIP 103742 / CB 15) (Caulobacter crescentus) protein is NAD kinase.